We begin with the raw amino-acid sequence, 410 residues long: LL-diaminopimelate aminotransferase (410 aa).

Substrate contacts are provided by Tyr15 and Gly42. Residues Tyr72, 108–109 (AK), Tyr132, Asn188, Tyr219, and 247–249 (SFS) each bind pyridoxal 5'-phosphate. The substrate site is built by Lys109, Tyr132, and Asn188. Lys250 carries the N6-(pyridoxal phosphate)lysine modification. Residues Arg258 and Asn293 each coordinate pyridoxal 5'-phosphate. Residues Asn293 and Arg389 each contribute to the substrate site.

This sequence belongs to the class-I pyridoxal-phosphate-dependent aminotransferase family. LL-diaminopimelate aminotransferase subfamily. Homodimer. The cofactor is pyridoxal 5'-phosphate.

The catalysed reaction is (2S,6S)-2,6-diaminopimelate + 2-oxoglutarate = (S)-2,3,4,5-tetrahydrodipicolinate + L-glutamate + H2O + H(+). It participates in amino-acid biosynthesis; L-lysine biosynthesis via DAP pathway; LL-2,6-diaminopimelate from (S)-tetrahydrodipicolinate (aminotransferase route): step 1/1. Its function is as follows. Involved in the synthesis of meso-diaminopimelate (m-DAP or DL-DAP), required for both lysine and peptidoglycan biosynthesis. Catalyzes the direct conversion of tetrahydrodipicolinate to LL-diaminopimelate. Can also use m-DAP instead of LL-DAP as the amino-group donor. The sequence is that of LL-diaminopimelate aminotransferase from Bacteroides fragilis (strain ATCC 25285 / DSM 2151 / CCUG 4856 / JCM 11019 / LMG 10263 / NCTC 9343 / Onslow / VPI 2553 / EN-2).